The following is a 104-amino-acid chain: Nucleoid-associated protein GAU_1113 (104 aa).

Belongs to the YbaB/EbfC family. As to quaternary structure, homodimer.

The protein localises to the cytoplasm. The protein resides in the nucleoid. In terms of biological role, binds to DNA and alters its conformation. May be involved in regulation of gene expression, nucleoid organization and DNA protection. This chain is Nucleoid-associated protein GAU_1113, found in Gemmatimonas aurantiaca (strain DSM 14586 / JCM 11422 / NBRC 100505 / T-27).